A 317-amino-acid polypeptide reads, in one-letter code: MAQNLSCENWLATEAILNKYYLSAFYAIEFIFGLLGNVTVVFGYLFCMKNWNSSNVYLFNLSISDFAFLCTLPILIKSYANDKGTYGDVLCISNRYVLHTNLYTSILFLTFISMDRYLLMKYPFREHFLQKKEFAILISLAVWALVTLEVLPMLTFINSVPKEEGSNCIDYASSGNPEHNLIYSLCLTLLGFLIPLSVMCFFYYKMVVFLKRRSQQQATALPLDKPQRLVVLAVVIFSILFTPYHIMRNLRIASRLDSWPQGCTQKAIKSIYTLTRPLAFLNSAINPIFYFLMGDHYREMLISKFRQYFKSLTSFRT.

The Extracellular segment spans residues 1 to 23 (MAQNLSCENWLATEAILNKYYLS). Residue asparagine 4 is glycosylated (N-linked (GlcNAc...) asparagine). The chain crosses the membrane as a helical span at residues 24 to 47 (AFYAIEFIFGLLGNVTVVFGYLFC). Residues 48 to 55 (MKNWNSSN) are Cytoplasmic-facing. A helical membrane pass occupies residues 56 to 76 (VYLFNLSISDFAFLCTLPILI). Residues 77–101 (KSYANDKGTYGDVLCISNRYVLHTN) lie on the Extracellular side of the membrane. Cysteine 91 and cysteine 168 are joined by a disulfide. Residues 102–119 (LYTSILFLTFISMDRYLL) form a helical membrane-spanning segment. The Cytoplasmic portion of the chain corresponds to 120-133 (MKYPFREHFLQKKE). Residues 134 to 157 (FAILISLAVWALVTLEVLPMLTFI) form a helical membrane-spanning segment. The Extracellular segment spans residues 158–180 (NSVPKEEGSNCIDYASSGNPEHN). A helical transmembrane segment spans residues 181 to 204 (LIYSLCLTLLGFLIPLSVMCFFYY). The Cytoplasmic portion of the chain corresponds to 205–228 (KMVVFLKRRSQQQATALPLDKPQR). Residues 229–246 (LVVLAVVIFSILFTPYHI) form a helical membrane-spanning segment. Topologically, residues 247–277 (MRNLRIASRLDSWPQGCTQKAIKSIYTLTRP) are extracellular. A helical membrane pass occupies residues 278 to 294 (LAFLNSAINPIFYFLMG). The Cytoplasmic segment spans residues 295–317 (DHYREMLISKFRQYFKSLTSFRT).

It belongs to the G-protein coupled receptor 1 family. Predominantly expressed in the kidney (proximal and distal tubules and the juxtaglomerular apparatus). Weakly expressed in liver, spleen and small intestine. Highly expressed in immature dendritic cells, expression rapidly downregulates after maturation. Also expressed in macrophages. Specifically expressed in intestinal tuft cells. Expression in whole muscle is attributable to major non-myofibrillar resident cell types, including stromal, endothelial and satellite cell populations.

Its subcellular location is the cell membrane. Functionally, g protein-coupled receptor for succinate able to mediate signaling through Gq/GNAQ or Gi/GNAI second messengers depending on the cell type and the processes regulated. Succinate-SUCNR1 signaling serves as a link between metabolic stress, inflammation and energy homeostasis. In macrophages, plays a range of immune-regulatory roles. During inflammation, succinate-SUCNR1 signaling may act as an anti-inflammatory mediator or boost inflammation depending on the inflammatory status of cells. Hyperpolarizes M2 macrophages versus M1 phenotype through Gq signaling by regulating the transcription of genes involved in immune function. In activated M1 macrophages, plays a pro-inflammatory role in response to LPS. Expressed in dendritic cells, where it is involved in the sensing of immunological danger and enhances immunity. Mediates succinate triggered intracelleular calcium mobilization, induces migratory responses and acts in synergy with Toll-like receptor ligands for the production of proinflammatory cytokines as well as an enhancement of antigen-specific activation of helper T cells. In the small intestine, mediates the activation of tuft cells by dietary succinate and triggers type 2 immunity. In adipocytes, plays an important role in the control of energy metabolism. In response to succinate, controls leptin expression in an AMPK-JNK-CEBPA-dependent as well as circadian clock-regulated manner. In muscle tissue, is expressed in non-muscle cells and coordinates muscle remodeling in response to the succinate produced during exercise training in a paracrine manner. In retina, acts as a mediator of vessel growth during retinal development. In response to succinate, regulates the production of angiogenic factors, including VEGF, by retinal ganglion neurons. The sequence is that of Succinate receptor 1 (Sucnr1) from Mus musculus (Mouse).